Here is a 291-residue protein sequence, read N- to C-terminus: G1/S-specific cyclin-D2 (291 aa).

The segment at 264 to 291 (QQQQSNPSKTIEELDQASTPTDVRDINL) is disordered. Residue Thr282 is modified to Phosphothreonine.

Belongs to the cyclin family. Cyclin D subfamily. In terms of assembly, interacts with the CDK4 and CDK6 protein kinases to form a serine/threonine kinase holoenzyme complex. The cyclin subunit imparts substrate specificity to the complex. In terms of processing, phosphorylation at Thr-282 by MAP kinases is required for ubiquitination and degradation by the DCX(AMBRA1) complex. Post-translationally, ubiquitinated by the DCX(AMBRA1) complex during the transition from G1 to S cell phase, leading to its degradation: ubiquitination is dependent on Thr-282 phosphorylation. The DCX(AMBRA1) complex represents the major regulator of CCND2 stability during the G1/S transition.

It is found in the nucleus. The protein localises to the cytoplasm. The protein resides in the nucleus membrane. Regulatory component of the cyclin D2-CDK4 (DC) complex that phosphorylates and inhibits members of the retinoblastoma (RB) protein family including RB1 and regulates the cell-cycle during G(1)/S transition. Phosphorylation of RB1 allows dissociation of the transcription factor E2F from the RB/E2F complex and the subsequent transcription of E2F target genes which are responsible for the progression through the G(1) phase. Hypophosphorylates RB1 in early G(1) phase. Cyclin D-CDK4 complexes are major integrators of various mitogenenic and antimitogenic signals. In Gallus gallus (Chicken), this protein is G1/S-specific cyclin-D2 (CCND2).